Reading from the N-terminus, the 293-residue chain is Elongation factor Ts (293 aa).

Positions 79-82 are involved in Mg(2+) ion dislocation from EF-Tu; that stretch reads TDFV.

It belongs to the EF-Ts family.

It localises to the cytoplasm. Associates with the EF-Tu.GDP complex and induces the exchange of GDP to GTP. It remains bound to the aminoacyl-tRNA.EF-Tu.GTP complex up to the GTP hydrolysis stage on the ribosome. This Halalkalibacterium halodurans (strain ATCC BAA-125 / DSM 18197 / FERM 7344 / JCM 9153 / C-125) (Bacillus halodurans) protein is Elongation factor Ts (tsf).